The sequence spans 209 residues: MTYLYNFFFFFFFFFSRGKAELIRLIFAYLQVKYTDIRFGVNGDAFAEFNNFKKEKEIPFNQVPILEIGGLILAQSQAIVRYLSKKYNISGNGELNEFYADMIFCGVQDIHYKFNNTNLFKQNETTFLNEELPKWSGYFEKLLQKNNTNYFVGDTITYADLAVFNLYDDIESKYPNCLKNFPLLKAHIELISNIPNIKHYIANRKESVY.

Positions F7–G91 constitute a GST N-terminal domain. Glutathione contacts are provided by residues Q62–V63, Q75–S76, D109, K121, and T125. Residues G93–Y209 enclose the GST C-terminal domain.

Belongs to the GST superfamily. Homodimer. In the absence of ligands two homodimers may interact to form a tetramer.

The enzyme catalyses RX + glutathione = an S-substituted glutathione + a halide anion + H(+). Its function is as follows. Conjugation of reduced glutathione to a wide number of exogenous and endogenous hydrophobic electrophiles. May also function as a storage protein or ligandin for parasitotoxic ferriprotoporphyrin IX (hemin). The sequence is that of Glutathione S-transferase from Plasmodium yoelii yoelii.